The chain runs to 259 residues: Proteasome subunit alpha (259 aa).

Belongs to the peptidase T1A family. In terms of assembly, the 20S proteasome core is composed of 14 alpha and 14 beta subunits that assemble into four stacked heptameric rings, resulting in a barrel-shaped structure. The two inner rings, each composed of seven catalytic beta subunits, are sandwiched by two outer rings, each composed of seven alpha subunits. The catalytic chamber with the active sites is on the inside of the barrel. Has a gated structure, the ends of the cylinder being occluded by the N-termini of the alpha-subunits. Is capped at one or both ends by the proteasome regulatory ATPase, PAN.

It localises to the cytoplasm. The formation of the proteasomal ATPase PAN-20S proteasome complex, via the docking of the C-termini of PAN into the intersubunit pockets in the alpha-rings, triggers opening of the gate for substrate entry. Interconversion between the open-gate and close-gate conformations leads to a dynamic regulation of the 20S proteasome proteolysis activity. Functionally, component of the proteasome core, a large protease complex with broad specificity involved in protein degradation. The chain is Proteasome subunit alpha from Methanococcus maripaludis (strain C7 / ATCC BAA-1331).